The chain runs to 144 residues: Large ribosomal subunit protein uL15 (144 aa).

Positions 1-58 (MQLNDLRSAPGARREKLRPGRGIGSGLGKTGGRGHKGQTSRSGGKIAPGFEGGQQPLH) are disordered. The span at 21-31 (RGIGSGLGKTG) shows a compositional bias: gly residues.

Belongs to the universal ribosomal protein uL15 family. In terms of assembly, part of the 50S ribosomal subunit.

Binds to the 23S rRNA. The sequence is that of Large ribosomal subunit protein uL15 from Azotobacter vinelandii (strain DJ / ATCC BAA-1303).